The primary structure comprises 537 residues: Chaperonin GroEL 1 (537 aa).

Residues 29–32, 86–90, Gly413, and Asp494 contribute to the ATP site; these read TLGP and DGTTT.

The protein belongs to the chaperonin (HSP60) family. Forms a cylinder of 14 subunits composed of two heptameric rings stacked back-to-back. Interacts with the co-chaperonin GroES.

It is found in the cytoplasm. It carries out the reaction ATP + H2O + a folded polypeptide = ADP + phosphate + an unfolded polypeptide.. Functionally, together with its co-chaperonin GroES, plays an essential role in assisting protein folding. The GroEL-GroES system forms a nano-cage that allows encapsulation of the non-native substrate proteins and provides a physical environment optimized to promote and accelerate protein folding. In Mycobacterium leprae (strain TN), this protein is Chaperonin GroEL 1.